Here is a 190-residue protein sequence, read N- to C-terminus: Elongation factor P (190 aa).

K34 carries the N6-(3,6-diaminohexanoyl)-5-hydroxylysine modification.

This sequence belongs to the elongation factor P family. Post-translationally, may be beta-lysylated on the epsilon-amino group of Lys-34 by the combined action of EpmA and EpmB, and then hydroxylated on the C5 position of the same residue by EpmC (if this protein is present). Lysylation is critical for the stimulatory effect of EF-P on peptide-bond formation. The lysylation moiety may extend toward the peptidyltransferase center and stabilize the terminal 3-CCA end of the tRNA. Hydroxylation of the C5 position on Lys-34 may allow additional potential stabilizing hydrogen-bond interactions with the P-tRNA.

The protein localises to the cytoplasm. The protein operates within protein biosynthesis; polypeptide chain elongation. In terms of biological role, involved in peptide bond synthesis. Alleviates ribosome stalling that occurs when 3 or more consecutive Pro residues or the sequence PPG is present in a protein, possibly by augmenting the peptidyl transferase activity of the ribosome. Modification of Lys-34 is required for alleviation. The polypeptide is Elongation factor P (Psychrobacter cryohalolentis (strain ATCC BAA-1226 / DSM 17306 / VKM B-2378 / K5)).